Reading from the N-terminus, the 121-residue chain is Ig heavy chain V region MPC 11 (121 aa).

An Ig-like domain is found at Glu-1–Gly-112.

This is Ig heavy chain V region MPC 11 from Mus musculus (Mouse).